The chain runs to 946 residues: Phosphatidylinositol 4,5-bisphosphate 5-phosphatase INP51 (946 aa).

The SAC domain occupies 151–480; it reads LKKLFSDGTF…YYWLDRTYTK (330 aa). 2 disordered regions span residues 872-902 and 927-946; these read SDSI…SDLK and PKRD…FIER. The segment covering 936–946 has biased composition (acidic residues); that stretch reads ENEDEPLFIER.

It belongs to the synaptojanin family. The protein in the central section; belongs to the inositol 1,4,5-trisphosphate 5-phosphatase family. Interacts with IRS4 and TAX4.

The protein localises to the cytoplasm. Its subcellular location is the cytoskeleton. It is found in the actin patch. It catalyses the reaction a 1,2-diacyl-sn-glycero-3-phospho-(1D-myo-inositol-4,5-bisphosphate) + H2O = a 1,2-diacyl-sn-glycero-3-phospho-(1D-myo-inositol 4-phosphate) + phosphate. With respect to regulation, IRS4 and TAX4 are both positive regulator of INP51 activity and phosphatidylinositol 4,5-bisphosphate turnover. Its function is as follows. Controls the cellular levels and subcellular distribution of phosphatidylinositol 4,5-bisphosphate (PtdIns(4,5)P2). Does not utilize phosphatidylinositol 3,5-bisphosphate (PtdIns(3,5)P2), nor phosphatidylinositol 3-phosphate (PtdIns(3)P) and phosphatidylinositol 4-phosphate (PtdIns(4)P). Plays an essential role in a TGN (trans Golgi network)-to-early endosome pathway. Involved in endocytosis and acts as a negative regulator of the Slm pathway which modulates polarized actin assembly and growth. The polypeptide is Phosphatidylinositol 4,5-bisphosphate 5-phosphatase INP51 (INP51) (Saccharomyces cerevisiae (strain ATCC 204508 / S288c) (Baker's yeast)).